Consider the following 375-residue polypeptide: Probable L-tyrosine/L-aspartate decarboxylase (375 aa).

K226 is subject to N6-(pyridoxal phosphate)lysine.

This sequence belongs to the group II decarboxylase family. MfnA subfamily. Requires pyridoxal 5'-phosphate as cofactor.

The enzyme catalyses L-tyrosine + H(+) = tyramine + CO2. The catalysed reaction is L-aspartate + H(+) = beta-alanine + CO2. It functions in the pathway cofactor biosynthesis; methanofuran biosynthesis. It participates in cofactor biosynthesis; coenzyme A biosynthesis. Functionally, catalyzes the decarboxylation of L-tyrosine to produce tyramine for methanofuran biosynthesis. Can also catalyze the decarboxylation of L-aspartate to produce beta-alanine for coenzyme A (CoA) biosynthesis. This chain is Probable L-tyrosine/L-aspartate decarboxylase, found in Methanocella arvoryzae (strain DSM 22066 / NBRC 105507 / MRE50).